The sequence spans 393 residues: 1-deoxy-D-xylulose 5-phosphate reductoisomerase (393 aa).

Thr-13, Gly-14, Ser-15, Ile-16, and Asn-128 together coordinate NADPH. Lys-129 provides a ligand contact to 1-deoxy-D-xylulose 5-phosphate. Residue Glu-130 coordinates NADPH. A Mn(2+)-binding site is contributed by Asp-154. 1-deoxy-D-xylulose 5-phosphate contacts are provided by Ser-155, Glu-156, Ser-178, and His-201. Glu-156 contributes to the Mn(2+) binding site. Gly-207 serves as a coordination point for NADPH. 1-deoxy-D-xylulose 5-phosphate contacts are provided by Ser-214, Asn-219, Lys-220, and Glu-223. Glu-223 lines the Mn(2+) pocket.

The protein belongs to the DXR family. It depends on Mg(2+) as a cofactor. Mn(2+) serves as cofactor.

The catalysed reaction is 2-C-methyl-D-erythritol 4-phosphate + NADP(+) = 1-deoxy-D-xylulose 5-phosphate + NADPH + H(+). The protein operates within isoprenoid biosynthesis; isopentenyl diphosphate biosynthesis via DXP pathway; isopentenyl diphosphate from 1-deoxy-D-xylulose 5-phosphate: step 1/6. Functionally, catalyzes the NADPH-dependent rearrangement and reduction of 1-deoxy-D-xylulose-5-phosphate (DXP) to 2-C-methyl-D-erythritol 4-phosphate (MEP). The protein is 1-deoxy-D-xylulose 5-phosphate reductoisomerase of Acidithiobacillus ferrooxidans (strain ATCC 23270 / DSM 14882 / CIP 104768 / NCIMB 8455) (Ferrobacillus ferrooxidans (strain ATCC 23270)).